The chain runs to 249 residues: 2,3-bisphosphoglycerate-dependent phosphoglycerate mutase 2 (249 aa).

Residues 8–15, 21–22, R60, 87–90, K98, 114–115, and 183–184 contribute to the substrate site; these read RHGESIWN, TG, ERHY, RR, and GN. The active-site Tele-phosphohistidine intermediate is the H9. Residue E87 is the Proton donor/acceptor of the active site.

It belongs to the phosphoglycerate mutase family. BPG-dependent PGAM subfamily. As to quaternary structure, homodimer.

It carries out the reaction (2R)-2-phosphoglycerate = (2R)-3-phosphoglycerate. Its pathway is carbohydrate degradation; glycolysis; pyruvate from D-glyceraldehyde 3-phosphate: step 3/5. Its function is as follows. Catalyzes the interconversion of 2-phosphoglycerate and 3-phosphoglycerate. The chain is 2,3-bisphosphoglycerate-dependent phosphoglycerate mutase 2 from Nitrosomonas europaea (strain ATCC 19718 / CIP 103999 / KCTC 2705 / NBRC 14298).